Consider the following 183-residue polypeptide: Capsid protein (183 aa).

The segment at 143 to 183 (LPETAVVRRRGRSPRRRTPSPRRRRSQSPRRRRSQSPASQC) is disordered. Residues 149–176 (VRRRGRSPRRRTPSPRRRRSQSPRRRRS) are compositionally biased toward basic residues. 3 positions are modified to phosphoserine; by host: serine 155, serine 162, and serine 170. A 1; half-length repeat occupies 155–161 (SPRRRTP). The tract at residues 155-177 (SPRRRTPSPRRRRSQSPRRRRSQ) is 3 X 8 AA repeats of S-P-R-R-R-[PR]-S-Q. Residues 158 to 175 (RRTPSPRRRRSQSPRRRR) carry the Bipartite nuclear localization signal motif. A run of 2 repeats spans residues 162–169 (SPRRRRSQ) and 170–177 (SPRRRRSQ). An RNA binding region spans residues 177–183 (QSPASQC).

It belongs to the orthohepadnavirus core antigen family. Homodimerizes, then multimerizes. Interacts with cytosol exposed regions of viral L glycoprotein present in the reticulum-to-Golgi compartment. Interacts with human FLNB. Phosphorylated form interacts with host importin alpha; this interaction depends on the exposure of the NLS, which itself depends upon genome maturation and/or phosphorylation of the capsid protein. Interacts with host NUP153. In terms of processing, phosphorylated by host SRPK1, SRPK2, and maybe protein kinase C or GAPDH. Phosphorylation is critical for pregenomic RNA packaging. Protein kinase C phosphorylation is stimulated by HBx protein and may play a role in transport of the viral genome to the nucleus at the late step during the viral replication cycle.

The protein resides in the virion. It localises to the host cytoplasm. Self assembles to form an icosahedral capsid. Most capsids appear to be large particles with an icosahedral symmetry of T=4 and consist of 240 copies of capsid protein, though a fraction forms smaller T=3 particles consisting of 180 capsid proteins. Entering capsids are transported along microtubules to the nucleus. Phosphorylation of the capsid is thought to induce exposure of nuclear localization signal in the C-terminal portion of the capsid protein that allows binding to the nuclear pore complex via the importin (karyopherin-) alpha and beta. Capsids are imported in intact form through the nuclear pore into the nuclear basket, where it probably binds NUP153. Only capsids that contain the mature viral genome can release the viral DNA and capsid protein into the nucleoplasm. Immature capsids get stuck in the basket. Capsids encapsulate the pre-genomic RNA and the P protein. Pre-genomic RNA is reverse-transcribed into DNA while the capsid is still in the cytoplasm. The capsid can then either be directed to the nucleus, providing more genomes for transcription, or bud through the endoplasmic reticulum to provide new virions. This chain is Capsid protein, found in Gorilla gorilla (western gorilla).